Consider the following 58-residue polypeptide: ATP synthase subunit a (58 aa).

2 helical membrane-spanning segments follow: residues E11–L31 and V35–I55.

The protein belongs to the ATPase A chain family. F-type ATPases have 2 components, CF(1) - the catalytic core - and CF(0) - the membrane proton channel. CF(1) has five subunits: alpha(3), beta(3), gamma(1), delta(1), epsilon(1). CF(0) has three main subunits: a, b and c.

It is found in the mitochondrion inner membrane. In terms of biological role, mitochondrial membrane ATP synthase (F(1)F(0) ATP synthase or Complex V) produces ATP from ADP in the presence of a proton gradient across the membrane which is generated by electron transport complexes of the respiratory chain. F-type ATPases consist of two structural domains, F(1) - containing the extramembraneous catalytic core and F(0) - containing the membrane proton channel, linked together by a central stalk and a peripheral stalk. During catalysis, ATP synthesis in the catalytic domain of F(1) is coupled via a rotary mechanism of the central stalk subunits to proton translocation. Key component of the proton channel; it may play a direct role in the translocation of protons across the membrane. The protein is ATP synthase subunit a (ATP6) of Brassica tournefortii (Wild turnip).